The primary structure comprises 472 residues: Adenosylhomocysteinase (472 aa).

Substrate contacts are provided by T60, D136, and E197. 198–200 is an NAD(+) binding site; that stretch reads TTT. Residues K227 and D231 each contribute to the substrate site. Residues N232, 261 to 266, E284, N319, 340 to 342, and N388 contribute to the NAD(+) site; these read GYGDVG and IGH.

The protein belongs to the adenosylhomocysteinase family. The cofactor is NAD(+).

The protein resides in the cytoplasm. The enzyme catalyses S-adenosyl-L-homocysteine + H2O = L-homocysteine + adenosine. It participates in amino-acid biosynthesis; L-homocysteine biosynthesis; L-homocysteine from S-adenosyl-L-homocysteine: step 1/1. In terms of biological role, may play a key role in the regulation of the intracellular concentration of adenosylhomocysteine. This is Adenosylhomocysteinase from Maridesulfovibrio salexigens (strain ATCC 14822 / DSM 2638 / NCIMB 8403 / VKM B-1763) (Desulfovibrio salexigens).